The following is a 172-amino-acid chain: Protein GrpE (172 aa).

The segment at 1-23 (MNQDHPECDSEELTQNSPETDPL) is disordered.

Belongs to the GrpE family. As to quaternary structure, homodimer.

It is found in the cytoplasm. Its function is as follows. Participates actively in the response to hyperosmotic and heat shock by preventing the aggregation of stress-denatured proteins, in association with DnaK and GrpE. It is the nucleotide exchange factor for DnaK and may function as a thermosensor. Unfolded proteins bind initially to DnaJ; upon interaction with the DnaJ-bound protein, DnaK hydrolyzes its bound ATP, resulting in the formation of a stable complex. GrpE releases ADP from DnaK; ATP binding to DnaK triggers the release of the substrate protein, thus completing the reaction cycle. Several rounds of ATP-dependent interactions between DnaJ, DnaK and GrpE are required for fully efficient folding. The chain is Protein GrpE from Xylella fastidiosa (strain 9a5c).